The sequence spans 2467 residues: Transcription factor TFIIIB component B'' homolog (2467 aa).

Disordered regions lie at residues 1-145 and 159-243; these read MFRR…RYRI and LRKE…VDDG. Residues 1–301 form an interaction with ZBTB43 region; that stretch reads MFRRARLSVK…TYSSFRKNYY (301 aa). A compositionally biased stretch (low complexity) spans 81 to 92; the sequence is AAESSTLSSASS. Residues 99–118 show a composition bias toward polar residues; the sequence is SSTSSLVQPSGSAPSQSRPL. Basic and acidic residues-rich tracts occupy residues 133 to 144 and 177 to 186; these read AKEKQPCSDRYR and RPPDRSKMTM. The stretch at 144 to 177 forms a coiled coil; it reads RIYKARKLREMLKEELRKEKKQWKNKFSTNESQR. Residues 231–242 show a composition bias toward acidic residues; sequence NDNEDVEEEVDD. The Myb-like domain occupies 297–347; the sequence is RKNYYSKPWSNKETDMFFLAISMVGTDFSMIGQLFPHRARIEIKNKFKREE. Residues 357–472 form a required for phosphorylation by CSNK2A1 region; the sequence is AFQEKRPFDF…QEKKRRRNQG (116 aa). Disordered stretches follow at residues 380–513, 576–720, 748–844, 866–893, 971–1200, 1231–1270, 1318–1388, 1409–1448, 1527–1561, 1592–1706, 1902–1926, 1977–2014, 2058–2083, 2179–2206, 2260–2290, and 2304–2449; these read EEKR…ECNK, SADM…VKAA, PPQT…PATW, LTAT…NAEM, LQEN…SSKI, LGRH…VKPA, DSDQ…LVPI, LPVR…PELQ, KAKP…EDHL, IHSE…RASK, IVSK…LPTR, IQRE…QCVG, LDSG…SDVP, LVVQ…DLTS, GIFP…SGSL, and LPQS…EEVT. Residues 458–487 adopt a coiled-coil conformation; it reads EQDQNQEKKRRRNQGEANKQEATNLLERVL. The span at 649–660 shows a compositional bias: basic and acidic residues; it reads AAEKNHMEKETM. Residues 809–824 show a composition bias toward basic residues; sequence RFQKPKPNTGRRRRRI. 6 stretches are compositionally biased toward basic and acidic residues: residues 873–884, 992–1002, 1009–1041, 1089–1098, 1112–1130, and 1150–1170; these read KDSESDVKDSGR, TGKDLAMKEST, TEER…RGEM, EGKELNLRET, EKTD…ERES, and DLGK…EEHS. 4 stretches are compositionally biased toward polar residues: residues 1180-1200, 1251-1265, 1318-1330, and 1364-1382; these read LSSS…SSKI, DTNL…QQPL, DSDQ…QHNV, and PPNS…NQEN. 3 stretches are compositionally biased toward basic and acidic residues: residues 1429-1448, 1536-1561, and 1592-1603; these read QIVE…PELQ, RRKD…EDHL, and IHSEESGSDRND. Polar residues-rich tracts occupy residues 1621 to 1642 and 1650 to 1665; these read EQPT…SSCP and YPKT…SSAS. Residues 1688–1697 show a composition bias toward basic residues; it reads RGSKRIRGKT. Basic and acidic residues-rich tracts occupy residues 1902 to 1913, 1977 to 1996, and 2068 to 2078; these read IVSKEQSNRDAA, IQRE…DKSH, and AAKEALKETPK. The span at 2185 to 2199 shows a compositional bias: low complexity; that stretch reads PSLSPSRSGSSEKPP. Polar residues-rich tracts occupy residues 2262 to 2273, 2319 to 2334, and 2414 to 2429; these read FPTSESTHATSK, PASN…SSSK, and TAGS…SSDQ.

Component of TFIIIB complex. The TFIIIB complex has two activities, alpha and beta. The TFIIIB-alpha and TFIIIB-beta activities are required for transcription of genes with TFIIIC-bound internal promoters and PSE transcription factor-bound external promoters, respectively. The TFIIIB-alpha activity complex is composed of TBP, BDP1, and a complex containing both BRF2 and at least four stably associated proteins; YY1 facilitates the formation of TFIIIB-alpha activity complex. The TFIIIB-beta activity complex is composed of TBP, BDP1, and BRF1. Interacts with BRF1; this interaction diminishes during mitosis resulting in the release of BDP1 from chromosomal templates. Component of TFIIIC complex. The TFIIIC complex has two activities, C1 and C2. The TFIIIC2 activity complex is only required for transcription of the 'classical' pol III genes whereas the TFIIIC1 activity complex is required for transcription of all pol III genes. The TFIIIC1 activity complex is composed at least of BDP1. Interacts with ZBTB43. Post-translationally, phosphorylated by CSNK2A1 during mitosis, resulting in its release from chromatin and suppression of polymerase III transcription. Expressed in the cochlea, particularly in the spiral ligament, the capillaries of the stria vascularis and the basilar membrane.

The protein resides in the nucleus. In terms of biological role, general activator of RNA polymerase III transcription. Requires for transcription from all three types of polymerase III promoters. Requires for transcription of genes with internal promoter elements and with promoter elements upstream of the initiation site. This Mus musculus (Mouse) protein is Transcription factor TFIIIB component B'' homolog (Bdp1).